The primary structure comprises 81 residues: Sulfur carrier protein TusA (81 aa).

The active-site Cysteine persulfide intermediate is Cys-19.

Belongs to the sulfur carrier protein TusA family.

Its subcellular location is the cytoplasm. Sulfur carrier protein which probably makes part of a sulfur-relay system. This is Sulfur carrier protein TusA from Shewanella woodyi (strain ATCC 51908 / MS32).